Here is a 160-residue protein sequence, read N- to C-terminus: UPF0479 membrane protein YER190C-B (160 aa).

The next 2 helical transmembrane spans lie at 39–59 (IVFCLPFFPALFFVPVQKVLQ) and 136–156 (VPMIWLDVFQVFFVFLVISQH).

It belongs to the UPF0479 family.

It is found in the membrane. The chain is UPF0479 membrane protein YER190C-B from Saccharomyces cerevisiae (strain ATCC 204508 / S288c) (Baker's yeast).